We begin with the raw amino-acid sequence, 795 residues long: Protein translocase subunit SecA 2 (795 aa).

ATP contacts are provided by residues Q84, 102 to 106 (GEGKT), and D496.

Belongs to the SecA family. In terms of assembly, monomer and homodimer. Part of the essential Sec protein translocation apparatus which comprises SecA, SecYEG and auxiliary proteins SecDF. Other proteins may also be involved.

Its subcellular location is the cell membrane. The protein resides in the cytoplasm. The catalysed reaction is ATP + H2O + cellular proteinSide 1 = ADP + phosphate + cellular proteinSide 2.. Functionally, part of the Sec protein translocase complex. Interacts with the SecYEG preprotein conducting channel. Has a central role in coupling the hydrolysis of ATP to the transfer of proteins into and across the cell membrane, serving as an ATP-driven molecular motor driving the stepwise translocation of polypeptide chains across the membrane. The protein is Protein translocase subunit SecA 2 of Streptococcus agalactiae serotype V (strain ATCC BAA-611 / 2603 V/R).